Here is a 350-residue protein sequence, read N- to C-terminus: MALVQQSSPHARRARPTSRVMLWVILAALPGLLAQTLFFGWGNLINVVWCIALALGSEAAFLKLRGKPVAFFLRDNTAAVTGLLLGLSLPQFTPWWVSGIAVVSAIVVAKQLYGGLGSNPFNPAMVGYALALISFPVAMTTNWAEAATLWGGAPGFGETLAKIFTGGQTAVDGWTMATPLDEYKHKIASHTSVEVLGHPTFGDLIARGWEWVNLAFLAGGVLLIALRIITWHIPVAFLAGIAAMSLAFGSNADQYAPLQLHLLAGGTMLGAFFIATDPVSAATSHQGKLIYGAGIGVLVYLIRSWGNYPDAVAFSVLLMNFAVPFIDHYTPPRTYGHHKARRGVPGRSGG.

4 consecutive transmembrane segments (helical) span residues 20–40 (VMLWVILAALPGLLAQTLFFG), 42–62 (GNLINVVWCIALALGSEAAFL), 89–109 (LPQFTPWWVSGIAVVSAIVVA), and 120–140 (PFNPAMVGYALALISFPVAMT). Thr178 carries the FMN phosphoryl threonine modification. The next 5 helical transmembrane spans lie at 204 to 224 (LIARGWEWVNLAFLAGGVLLI), 228 to 248 (IITWHIPVAFLAGIAAMSLAF), 255 to 275 (YAPLQLHLLAGGTMLGAFFIA), 282 to 302 (ATSHQGKLIYGAGIGVLVYLI), and 306 to 326 (GNYPDAVAFSVLLMNFAVPFI).

Belongs to the NqrB/RnfD family. The complex is composed of six subunits: RnfA, RnfB, RnfC, RnfD, RnfE and RnfG. The cofactor is FMN.

It localises to the cell inner membrane. Its function is as follows. Part of a membrane-bound complex that couples electron transfer with translocation of ions across the membrane. The protein is Ion-translocating oxidoreductase complex subunit D of Marinobacter nauticus (strain ATCC 700491 / DSM 11845 / VT8) (Marinobacter aquaeolei).